Here is a 57-residue protein sequence, read N- to C-terminus: Lantibiotic nukacin (57 aa).

A propeptide spanning residues methionine 1 to alanine 30 is cleaved from the precursor. A cross-link (beta-methyllanthionine (Thr-Cys)) is located at residues threonine 39 to cysteine 44. 2 consecutive cross-links (lanthionine (Ser-Cys)) follow at residues serine 41–cysteine 55 and serine 48–cysteine 56. Threonine 54 carries the 2,3-didehydrobutyrine modification.

In terms of processing, maturation of lantibiotics involves the enzymatic conversion of Thr, and Ser into dehydrated AA and the formation of thioether bonds with cysteine. This is followed by membrane translocation and cleavage of the modified precursor.

Its subcellular location is the secreted. Its function is as follows. Lanthionine-containing peptide antibiotic (lantibiotic) active on Gram-positive bacteria. The bactericidal activity of lantibiotics is based on depolarization of energized bacterial cytoplasmic membranes, initiated by the formation of aqueous transmembrane pores. This is Lantibiotic nukacin from Staphylococcus simulans.